Reading from the N-terminus, the 1241-residue chain is Phosphorylase b kinase regulatory subunit alpha, skeletal muscle isoform (1241 aa).

Phosphoserine occurs at positions 629, 730, 736, 739, 759, 812, 973, 982, and 986. A calmodulin-binding region spans residues Leu-811–Leu-841. The residue at position 1008 (Ser-1008) is a Phosphoserine; by autocatalysis. Phosphoserine; by PKA is present on Ser-1019. Phosphoserine is present on residues Ser-1021 and Ser-1024. Residues Ser-1064–Ser-1104 are calmodulin-binding. Ser-1131 is subject to Phosphoserine. Cys-1238 carries the S-farnesyl cysteine lipid modification.

It belongs to the phosphorylase b kinase regulatory chain family. Hexadecamer of 4 heterotetramers, each composed of alpha, beta, gamma, and delta subunits. Alpha (PHKA1 or PHKA2) and beta (PHKB) are regulatory subunits, gamma (PHKG1 or PHKG2) is the catalytic subunit, and delta is calmodulin. Although the final Cys may be farnesylated, the terminal tripeptide is probably not removed, and the C-terminus is not methylated. As to expression, both isoforms are expressed in muscle.

It localises to the cell membrane. Its pathway is glycan biosynthesis; glycogen metabolism. Its activity is regulated as follows. By phosphorylation of various serine residues and by calcium. Phosphorylase b kinase catalyzes the phosphorylation of serine in certain substrates, including troponin I. The alpha chain may bind calmodulin. In Mus musculus (Mouse), this protein is Phosphorylase b kinase regulatory subunit alpha, skeletal muscle isoform (Phka1).